The chain runs to 354 residues: UDP-N-acetylglucosamine--N-acetylmuramyl-(pentapeptide) pyrophosphoryl-undecaprenol N-acetylglucosamine transferase (354 aa).

UDP-N-acetyl-alpha-D-glucosamine is bound by residues 15–17 (TGG), N127, R163, S191, I244, 263–268 (ALTVSE), and Q288.

It belongs to the glycosyltransferase 28 family. MurG subfamily.

It localises to the cell inner membrane. It carries out the reaction di-trans,octa-cis-undecaprenyl diphospho-N-acetyl-alpha-D-muramoyl-L-alanyl-D-glutamyl-meso-2,6-diaminopimeloyl-D-alanyl-D-alanine + UDP-N-acetyl-alpha-D-glucosamine = di-trans,octa-cis-undecaprenyl diphospho-[N-acetyl-alpha-D-glucosaminyl-(1-&gt;4)]-N-acetyl-alpha-D-muramoyl-L-alanyl-D-glutamyl-meso-2,6-diaminopimeloyl-D-alanyl-D-alanine + UDP + H(+). Its pathway is cell wall biogenesis; peptidoglycan biosynthesis. Cell wall formation. Catalyzes the transfer of a GlcNAc subunit on undecaprenyl-pyrophosphoryl-MurNAc-pentapeptide (lipid intermediate I) to form undecaprenyl-pyrophosphoryl-MurNAc-(pentapeptide)GlcNAc (lipid intermediate II). The chain is UDP-N-acetylglucosamine--N-acetylmuramyl-(pentapeptide) pyrophosphoryl-undecaprenol N-acetylglucosamine transferase from Aliivibrio fischeri (strain MJ11) (Vibrio fischeri).